Reading from the N-terminus, the 819-residue chain is Cadherin-24 (819 aa).

A signal peptide spans 1–19 (MWGLVRLLLAWLGGWGCMG). Residues 21-44 (LAAPARAWAGSREHPGPALLRTRR) constitute a propeptide that is removed on maturation. Residues 45-641 (SWVWNQFFVI…LSAAGLSTGA (597 aa)) lie on the Extracellular side of the membrane. Cadherin domains follow at residues 46-150 (WVWN…PPIF), 151-259 (PLGP…PPKF), 260-374 (PQSL…PPAF), 375-517 (TQAA…APQL), and 517-630 (LAEP…WPEA). Asn-446, Asn-548, and Asn-563 each carry an N-linked (GlcNAc...) asparagine glycan. Residues 642–662 (LLAIITCVGALLALVVLFVAL) traverse the membrane as a helical segment. The Cytoplasmic segment spans residues 663 to 819 (RRQKQEALMV…LYGAKEPPAP (157 aa)). The tract at residues 768–800 (YEGRGSSCGSLSSLGSGSEAGGAPGPAEPLDDW) is disordered. Over residues 771–784 (RGSSCGSLSSLGSG) the composition is skewed to low complexity.

In terms of assembly, associates with alpha-, beta- and delta-catenins.

It localises to the cell membrane. Functionally, cadherins are calcium-dependent cell adhesion proteins. They preferentially interact with themselves in a homophilic manner in connecting cells; cadherins may thus contribute to the sorting of heterogeneous cell types. Cadherin-24 mediate strong cell-cell adhesion. This chain is Cadherin-24 (CDH24), found in Homo sapiens (Human).